Reading from the N-terminus, the 496-residue chain is UDP-N-acetylmuramoylalanine--D-glutamate ligase (496 aa).

130–136 (GTNGKTT) serves as a coordination point for ATP.

Belongs to the MurCDEF family.

Its subcellular location is the cytoplasm. The catalysed reaction is UDP-N-acetyl-alpha-D-muramoyl-L-alanine + D-glutamate + ATP = UDP-N-acetyl-alpha-D-muramoyl-L-alanyl-D-glutamate + ADP + phosphate + H(+). Its pathway is cell wall biogenesis; peptidoglycan biosynthesis. Cell wall formation. Catalyzes the addition of glutamate to the nucleotide precursor UDP-N-acetylmuramoyl-L-alanine (UMA). The protein is UDP-N-acetylmuramoylalanine--D-glutamate ligase of Mycobacterium bovis (strain ATCC BAA-935 / AF2122/97).